The sequence spans 318 residues: Aspartate carbamoyltransferase catalytic subunit (318 aa).

R66 and T67 together coordinate carbamoyl phosphate. K94 lines the L-aspartate pocket. R116, H144, and Q147 together coordinate carbamoyl phosphate. L-aspartate-binding residues include R177 and R231. 2 residues coordinate carbamoyl phosphate: G272 and P273.

Belongs to the aspartate/ornithine carbamoyltransferase superfamily. ATCase family. As to quaternary structure, heterododecamer (2C3:3R2) of six catalytic PyrB chains organized as two trimers (C3), and six regulatory PyrI chains organized as three dimers (R2).

The enzyme catalyses carbamoyl phosphate + L-aspartate = N-carbamoyl-L-aspartate + phosphate + H(+). It participates in pyrimidine metabolism; UMP biosynthesis via de novo pathway; (S)-dihydroorotate from bicarbonate: step 2/3. Catalyzes the condensation of carbamoyl phosphate and aspartate to form carbamoyl aspartate and inorganic phosphate, the committed step in the de novo pyrimidine nucleotide biosynthesis pathway. The chain is Aspartate carbamoyltransferase catalytic subunit from Frankia casuarinae (strain DSM 45818 / CECT 9043 / HFP020203 / CcI3).